A 438-amino-acid chain; its full sequence is MQTIYTRITDIKGNLITVEAEGASLGELVQIERADGRSSYASVLRFDAKKVTLQVFGGTSGLSTGDKVVFLGRPMEVVYGDSLLGRRFNGTGKPIDNEEICFGEPIPITTPSFNPVCRIVPREMVRTNIPMIDMFNCLVKSQKIPIFSSSGENHNALLMRIAAQTDADIVIIGGMGLTFVDYSFFVEESQRLGFADKCVMFIHKAVDAPVECVLIPDMALACAERFALEQKKNVLVLLTDMTAFADALKEIAITMDQIPANRGYPGSLYSDLAVRYEKAVDIAQGGSITLISVTTMPGDDITHPVPDNTGFITEGQFYLKDNRIDPFGSLSRLKQLVIGKRTREDHGDLANALIRLYADSRKSAERMSMGFKLSNWDKKLLAFAELFETRLMSLEVNIPLEEALDIGWKILAQSFHSEEVGIKEQLIQKYWPKACLHK.

It belongs to the ATPase alpha/beta chains family.

Its function is as follows. Produces ATP from ADP in the presence of a proton gradient across the membrane. The V-type beta chain is a regulatory subunit. This Chlamydia muridarum (strain MoPn / Nigg) protein is V-type ATP synthase beta chain (atpB).